The following is a 119-amino-acid chain: Large ribosomal subunit protein bL17 (119 aa).

It belongs to the bacterial ribosomal protein bL17 family. In terms of assembly, part of the 50S ribosomal subunit. Contacts protein L32.

In Malacoplasma penetrans (strain HF-2) (Mycoplasma penetrans), this protein is Large ribosomal subunit protein bL17.